The following is an 883-amino-acid chain: Coatomer subunit gamma (883 aa).

The tract at residues 1–25 (MNYFSLTSHKKHRGHPSAGPSNAYQ) is disordered. 6 HEAT repeats span residues 69–106 (REATDCFFAMTKLFQSKDVVLRRMVYLGIKELSSIAED), 292–329 (RMLSPAFSILQLFCSSPKATLRFAAVRTLNKVAMTHPA), 331–364 (VTTCNLDLEGLITDSNRSVATLAITTLLKTGAES), 365–401 (SVERLMKQISTFVAEISDEFKVVVVQAICALCTKYPR), 404–439 (TVLMNFLSGMLREEGGLEYKTSIVDTIITIIEENAD), and 476–513 (ATPSKYIRFIYNRVILESPIVRAAAVTAMAQFGASCPA).

This sequence belongs to the COPG family. Oligomeric complex that consists of at least the alpha, beta, beta', gamma, delta, epsilon and zeta subunits. In terms of tissue distribution, expressed in ovary, testis, testis tip, young spermatocytes, germ cells and follicle cells. Up-regulated expression within centrally to posteriorly located germarial cysts and in migrating follicle cells. Widespread expression in imaginal disks including eye-antennal disk, wing disk, third leg and haltere disk.

The protein localises to the cytoplasm. Its subcellular location is the golgi apparatus membrane. It is found in the cytoplasmic vesicle. The protein resides in the COPI-coated vesicle membrane. It localises to the endoplasmic reticulum. In terms of biological role, the coatomer is a cytosolic protein complex that binds to dilysine motifs and reversibly associates with Golgi non-clathrin-coated vesicles, which further mediate biosynthetic protein transport from the ER, via the Golgi up to the trans Golgi network. Coatomer complex is required for budding from Golgi membranes, and is essential for the retrograde Golgi-to-ER transport of dilysine-tagged proteins. Required for limiting lipid storage in lipid droplets. Involved in the expansion of luminal extracellular matrices and apical membrane during tubulogenesis. Required in the tracheal epithelium for luminal protein secretion and diametric tube growth. In salivary glands, required for deposition of O-glycans and luminal extracellular matrix assembly. Required for epidermal morphogenesis and cuticle development. The protein is Coatomer subunit gamma of Drosophila melanogaster (Fruit fly).